The primary structure comprises 362 residues: Outer membrane porin protein OmpD (362 aa).

The signal sequence occupies residues 1-21 (MKLKLVAVAVTSLLAAGVVNA).

It belongs to the Gram-negative porin family. Homotrimer.

Its subcellular location is the cell outer membrane. Forms pores that allow passive diffusion of small molecules across the outer membrane. This Salmonella choleraesuis (strain SC-B67) protein is Outer membrane porin protein OmpD (ompD).